A 140-amino-acid chain; its full sequence is Large ribosomal subunit protein uL13 (140 aa).

It belongs to the universal ribosomal protein uL13 family. As to quaternary structure, part of the 50S ribosomal subunit.

This protein is one of the early assembly proteins of the 50S ribosomal subunit, although it is not seen to bind rRNA by itself. It is important during the early stages of 50S assembly. The polypeptide is Large ribosomal subunit protein uL13 (Sulfurimonas denitrificans (strain ATCC 33889 / DSM 1251) (Thiomicrospira denitrificans (strain ATCC 33889 / DSM 1251))).